A 1350-amino-acid polypeptide reads, in one-letter code: Probable serine/threonine-protein kinase DDB_G0278845 (1350 aa).

Disordered stretches follow at residues 66–109 (RELN…NNIR), 121–159 (ENGL…PKGL), 179–249 (LANN…LNSI), 270–296 (SSIN…NEYS), 337–396 (NNYN…RDDL), 431–506 (GSTI…EKKK), 525–596 (NDSN…IPTP), and 612–701 (NNNS…NTNE). Positions 84 to 98 (KYLTSSHSSVVIPQD) are enriched in polar residues. Low complexity-rich tracts occupy residues 127-140 (SPTS…TPTT) and 181-210 (NNNN…NNSN). A compositionally biased stretch (polar residues) spans 211–222 (KISRLINNSNTT). Residues 223–235 (DSNASIRSSNNNN) are compositionally biased toward low complexity. Acidic residues predominate over residues 236–246 (DDFDNNDDEDL). Low complexity-rich tracts occupy residues 270 to 293 (SSIN…DNVN) and 337 to 391 (NNYN…GYNN). The segment covering 431-443 (GSTIFTSTSSDIA) has biased composition (polar residues). Residues 454 to 482 (NENENENENENENENENDNDSDSENENEN) show a composition bias toward acidic residues. Composition is skewed to low complexity over residues 483-495 (DNSI…KSNS) and 525-551 (NDSN…PFSP). Residues 565 to 592 (PKPTLQRQRSNSKNVLYSPNASPSNSCK) show a composition bias toward polar residues. 3 stretches are compositionally biased toward low complexity: residues 612–637 (NNNS…NNID), 645–679 (NNNN…NNNN), and 690–701 (KKTPNNKINTNE). Positions 756-1082 (FTLIEKIGEG…VENIKNHIFF (327 aa)) constitute a Protein kinase domain. ATP is bound by residues 762-770 (IGEGGFGQV) and lysine 785. Catalysis depends on aspartate 880, which acts as the Proton acceptor. An AGC-kinase C-terminal domain is found at 1083–1203 (NGVPWGKLHD…PRADDQPLLW (121 aa)). Disordered regions lie at residues 1129 to 1159 (SLLP…NDKM), 1190 to 1219 (GFTY…NNNN), 1232 to 1285 (NNNN…NKTV), and 1300 to 1350 (NCNN…KQQQ). Positions 1131–1142 (LPPPLPPPPQTP) are enriched in pro residues. Low complexity-rich tracts occupy residues 1204 to 1219 (NNNN…NNNN), 1232 to 1283 (NNNN…SNNK), and 1300 to 1313 (NCNN…NNIN). Polar residues-rich tracts occupy residues 1314–1330 (TGNL…SGEN) and 1338–1350 (PTSP…KQQQ).

This sequence belongs to the protein kinase superfamily. AGC Ser/Thr protein kinase family.

The enzyme catalyses L-seryl-[protein] + ATP = O-phospho-L-seryl-[protein] + ADP + H(+). The catalysed reaction is L-threonyl-[protein] + ATP = O-phospho-L-threonyl-[protein] + ADP + H(+). This is Probable serine/threonine-protein kinase DDB_G0278845 from Dictyostelium discoideum (Social amoeba).